We begin with the raw amino-acid sequence, 151 residues long: Nucleoside diphosphate kinase (151 aa).

K11, F59, R87, T93, R104, and N114 together coordinate ATP. Residue H117 is the Pros-phosphohistidine intermediate of the active site.

Belongs to the NDK family. Homohexamer. Mg(2+) is required as a cofactor.

It catalyses the reaction a 2'-deoxyribonucleoside 5'-diphosphate + ATP = a 2'-deoxyribonucleoside 5'-triphosphate + ADP. The catalysed reaction is a ribonucleoside 5'-diphosphate + ATP = a ribonucleoside 5'-triphosphate + ADP. Its function is as follows. Major role in the synthesis of nucleoside triphosphates other than ATP. The ATP gamma phosphate is transferred to the NDP beta phosphate via a ping-pong mechanism, using a phosphorylated active-site intermediate. The chain is Nucleoside diphosphate kinase from Ginglymostoma cirratum (Nurse shark).